The chain runs to 125 residues: Large ribosomal subunit protein bL12 (125 aa).

This sequence belongs to the bacterial ribosomal protein bL12 family. In terms of assembly, homodimer. Part of the ribosomal stalk of the 50S ribosomal subunit. Forms a multimeric L10(L12)X complex, where L10 forms an elongated spine to which 2 to 4 L12 dimers bind in a sequential fashion. Binds GTP-bound translation factors.

Forms part of the ribosomal stalk which helps the ribosome interact with GTP-bound translation factors. Is thus essential for accurate translation. The sequence is that of Large ribosomal subunit protein bL12 from Bradyrhizobium sp. (strain BTAi1 / ATCC BAA-1182).